The sequence spans 202 residues: Imidazole glycerol phosphate synthase subunit HisH (202 aa).

A Glutamine amidotransferase type-1 domain is found at 3-202; sequence RIVIIDYGLG…KILRNFVEMC (200 aa). The Nucleophile role is filled by cysteine 79. Catalysis depends on residues histidine 183 and glutamate 185.

Heterodimer of HisH and HisF.

It is found in the cytoplasm. The catalysed reaction is 5-[(5-phospho-1-deoxy-D-ribulos-1-ylimino)methylamino]-1-(5-phospho-beta-D-ribosyl)imidazole-4-carboxamide + L-glutamine = D-erythro-1-(imidazol-4-yl)glycerol 3-phosphate + 5-amino-1-(5-phospho-beta-D-ribosyl)imidazole-4-carboxamide + L-glutamate + H(+). It carries out the reaction L-glutamine + H2O = L-glutamate + NH4(+). Its pathway is amino-acid biosynthesis; L-histidine biosynthesis; L-histidine from 5-phospho-alpha-D-ribose 1-diphosphate: step 5/9. Its function is as follows. IGPS catalyzes the conversion of PRFAR and glutamine to IGP, AICAR and glutamate. The HisH subunit catalyzes the hydrolysis of glutamine to glutamate and ammonia as part of the synthesis of IGP and AICAR. The resulting ammonia molecule is channeled to the active site of HisF. The protein is Imidazole glycerol phosphate synthase subunit HisH of Methanosarcina mazei (strain ATCC BAA-159 / DSM 3647 / Goe1 / Go1 / JCM 11833 / OCM 88) (Methanosarcina frisia).